A 305-amino-acid chain; its full sequence is Mitochondrial thiamine pyrophosphate carrier 1 (305 aa).

6 consecutive transmembrane segments (helical) span residues 16–32, 84–100, 122–142, 169–193, 213–229, and 270–287; these read VSPY…GAVA, ILYV…YSSI, LVSG…FDLL, GFTG…LMFW, ICGF…TFPL, and GFGI…VSLF. Solcar repeat units lie at residues 16 to 103, 116 to 201, and 206 to 295; these read VSPY…ISRW, PSSA…VRET, and DIPF…SLAA.

The protein belongs to the mitochondrial carrier (TC 2.A.29) family.

Its subcellular location is the mitochondrion inner membrane. Mitochondrial transporter that mediates uptake of thiamine pyrophosphate (ThPP) into mitochondria. The sequence is that of Mitochondrial thiamine pyrophosphate carrier 1 (TPC1) from Scheffersomyces stipitis (strain ATCC 58785 / CBS 6054 / NBRC 10063 / NRRL Y-11545) (Yeast).